The following is a 735-amino-acid chain: MEPAQKKLRQESKNPYLAHLNNGDDSEEVVSSKGLTRRATTVAQAAKAEEGPNNFFNDKPFSQNYFKILETRRELPVYQQREEFLKIYHENQIIVFVGETGSGKTTQIPQFVLYDELPHLTNTQIACTQPRRVAAMSVAKRVADEMDVDLGEEVGYNIRFEDCSGPNTLLKYMTDGMLLREAMTDHMLSRYSCIILDEAHERTLATDILMGLMKRLATRRPDLKIIVMSATLDAKKFQKYFFDAPLLAVPGRTYPVEIYYTQEPERDYLEAALRTVLQIHVEEGPGDILVFLTGEEEIEDACRKITLEADDLVREGAAGPLKVYPLYGSLPPNQQQRIFEPTPEDTKSGYGRKVVISTNIAETSLTIDGIVYVVDPGFSKQKIYNPRIRVESLLVSPISKASAQQRAGRAGRTRPGKCFRLYTEEAFRKELIEQTYPEILRSNLSSTVLELKKLGIDDLVHFDYMDPPAPETMMRALEELNYLNCLDDNGDLTPLGRKASEFPLDPNLAVMLIRSPEFYCSNEVLSLTALLSVPNVFVRPNSARKLADEMRQQFTHPDGDHLTLLNVYHAYKSGEGTADWCWNHFLSHRALISADNVRKQLRRTMERQEVELISTPFDDKNYYVNIRRALVSGFFMQVAKKSANGKNYVTMKDNQVVSLHPSCGLSVTPEWVVYNEFVLTTKSFIRNVTAIRPEWLIELAPNYYDLDDFDNNKEVKSALQKVYQMAARSKKNARR.

A compositionally biased stretch (basic and acidic residues) spans M1–S12. Residues M1–G34 are disordered. Residues L85 to P250 form the Helicase ATP-binding domain. An ATP-binding site is contributed by G98 to T105. The DEAH box signature appears at D197–H200. The Helicase C-terminal domain maps to T275–G455.

Belongs to the DEAD box helicase family. DEAH subfamily. DDX15/PRP43 sub-subfamily.

Its subcellular location is the nucleus. The enzyme catalyses ATP + H2O = ADP + phosphate + H(+). Pre-mRNA processing factor involved in disassembly of spliceosomes after the release of mature mRNA. This Schizosaccharomyces pombe (strain 972 / ATCC 24843) (Fission yeast) protein is Probable pre-mRNA-splicing factor ATP-dependent RNA helicase prp43 (prp43).